A 376-amino-acid chain; its full sequence is MDDDEQKGYTWEAGYAEGLNINDVLVEDEGGSIEKSIAKYVADSKRKARLTKRPERIRLGIMRHVMIVIDCSRFMTSKAMPPSRFVVVMKALQTFLDRFFEQNPIAQIGLITCKDRKADRLTMMTGNIRVLKESLNTLTEAFCGGDFSLQNALQLACANLKGMPGHVSREVVLVISALSTIDPGNIYSTIETMKRMNIRCSAIGLSAEMFVCKEMAKATKGEYSVALDPDHLQLLFSKHTLPPSSAKSSECNAIHVGFPHHELITTRSFCVCHPDTKPISSRGFICTQCGARHCSIPAECPVCKLTLVAAPQLARAFRHLQPLSAFEQIEVTRGFCYACETRLSGEGFRCGSCQLVFCLDCDTLLHESLHVCPGCN.

The 143-residue stretch at 64 to 206 (HVMIVIDCSR…NIRCSAIGLS (143 aa)) folds into the VWFA domain. The C4-type zinc-finger motif lies at 286–303 (CTQCGARHCSIPAECPVC).

Belongs to the GTF2H2 family. As to quaternary structure, component of the 7-subunit TFIIH core complex composed of xpb-1, xpd-1, gtf-2H1, gtf-2H2C, gtf-2H3, Y73F8A.24 and gtf-2H5, which is active in NER. The core complex associates with the 3-subunit CDK-activating kinase (CAK) module composed of cyh-1, cdk-7 and mnat-1 to form the 10-subunit holoenzyme (holo-TFIIH) active in transcription.

It localises to the nucleus. In terms of biological role, component of the general transcription and DNA repair factor IIH (TFIIH) core complex, which is involved in general and transcription-coupled nucleotide excision repair (NER) of damaged DNA and, when complexed to CAK, in RNA transcription by RNA polymerase II. In NER, TFIIH acts by opening DNA around the lesion to allow the excision of the damaged oligonucleotide and its replacement by a new DNA fragment. In transcription, TFIIH has an essential role in transcription initiation. When the pre-initiation complex (PIC) has been established, TFIIH is required for promoter opening and promoter escape. Phosphorylation of the C-terminal tail (CTD) of the largest subunit of RNA polymerase II by the kinase module CAK controls the initiation of transcription. This is General transcription factor IIH subunit 2 from Caenorhabditis elegans.